The following is a 212-amino-acid chain: Mediator of RNA polymerase II transcription subunit 20 (212 aa).

The protein belongs to the Mediator complex subunit 20 family. Component of the Mediator complex, which is composed of MED1, MED4, MED6, MED7, MED8, MED9, MED10, MED11, MED12, MED13, MED13L, MED14, MED15, MED16, MED17, MED18, MED19, MED20, MED21, MED22, MED23, MED24, MED25, MED26, MED27, MED29, MED30, MED31, CCNC, CDK8 and CDC2L6/CDK11. The MED12, MED13, CCNC and CDK8 subunits form a distinct module termed the CDK8 module. Mediator containing the CDK8 module is less active than Mediator lacking this module in supporting transcriptional activation. Individual preparations of the Mediator complex lacking one or more distinct subunits have been variously termed ARC, CRSP, DRIP, PC2, SMCC and TRAP. Interacts with PPARG.

It is found in the nucleus. Its function is as follows. Component of the Mediator complex, a coactivator involved in the regulated transcription of nearly all RNA polymerase II-dependent genes. Mediator functions as a bridge to convey information from gene-specific regulatory proteins to the basal RNA polymerase II transcription machinery. Mediator is recruited to promoters by direct interactions with regulatory proteins and serves as a scaffold for the assembly of a functional preinitiation complex with RNA polymerase II and the general transcription factors. The polypeptide is Mediator of RNA polymerase II transcription subunit 20 (MED20) (Macaca fascicularis (Crab-eating macaque)).